A 78-amino-acid chain; its full sequence is Translational regulator CsrA (78 aa).

Belongs to the CsrA/RsmA family. Homodimer; the beta-strands of each monomer intercalate to form a hydrophobic core, while the alpha-helices form wings that extend away from the core.

The protein localises to the cytoplasm. Its function is as follows. A translational regulator that binds mRNA to regulate translation initiation and/or mRNA stability. Usually binds in the 5'-UTR at or near the Shine-Dalgarno sequence preventing ribosome-binding, thus repressing translation. Its main target seems to be the major flagellin gene, while its function is anatagonized by FliW. The protein is Translational regulator CsrA of Natranaerobius thermophilus (strain ATCC BAA-1301 / DSM 18059 / JW/NM-WN-LF).